We begin with the raw amino-acid sequence, 290 residues long: MLRRQARERREYLYRKAQELQDSQLQQKRQIIKQALAQGKPLPKELAEDESLQKDFRYDQSLKESEEADDLQVDDEYAATSGIMDPRIIVTTSRDPSTRLSQFAKEIKLLFPNAVRLNRGNYVMPNLVDACKKSGTTDLVVLHEHRGVPTSLTISHFPHGPTAQFSLHNVVMRHDIINAGNQSEVNPHLIFDNFTTALGKRVVCILKHLFNAGPKKDSERVITFANRGDFISVRQHVYVRTREGVEIAEVGPRFEMRLFELRLGTLENKDADVEWQLRRFIRTANKKDYL.

The Brix domain occupies Pro-86–Glu-267.

Component of a heterotrimeric complex containing IMP3, IMP4 and MPP10. Interacts with MPP10. Component of the ribosomal small subunit (SSU) processome composed of at least 40 protein subunits and snoRNA U3.

The protein resides in the nucleus. The protein localises to the nucleolus. Functionally, required for the early cleavages at sites A0, A1 and A2 during 18S ribosomal pre-RNA processing. The sequence is that of U3 small nucleolar ribonucleoprotein protein IMP4 (IMP4) from Saccharomyces cerevisiae (strain ATCC 204508 / S288c) (Baker's yeast).